A 125-amino-acid polypeptide reads, in one-letter code: Small ribosomal subunit protein eS8 (125 aa).

This sequence belongs to the eukaryotic ribosomal protein eS8 family. As to quaternary structure, part of the 30S ribosomal subunit.

This chain is Small ribosomal subunit protein eS8, found in Methanocorpusculum labreanum (strain ATCC 43576 / DSM 4855 / Z).